Consider the following 500-residue polypeptide: Hexose transporter 1 (500 aa).

At M1–S25 the chain is on the cytoplasmic side. The chain crosses the membrane as a helical span at residues L26–L46. At N47–S75 the chain is on the extracellular side. A disulfide bridge links C60 with C67. A helical transmembrane segment spans residues F76 to V96. The Cytoplasmic segment spans residues Q97 to R101. Residues F102 to H122 form a helical membrane-spanning segment. At H123–R131 the chain is on the extracellular side. A helical membrane pass occupies residues L132–M152. Topologically, residues T153–Q166 are cytoplasmic. Q166 contacts alpha-D-glucose. Residue Q166 participates in beta-D-glucose binding. Residues L167–P187 traverse the membrane as a helical segment. The Extracellular segment spans residues E188–R203. A helical membrane pass occupies residues L204–F224. The Cytoplasmic portion of the chain corresponds to K225–Y289. The helical transmembrane segment at V290–V310 threads the bilayer. Alpha-D-glucose contacts are provided by Q301, Q302, and N307. Q301 contacts beta-D-glucose. Residue N307 coordinates beta-D-glucose. Topologically, residues S311–T327 are extracellular. Residues T328–V348 form a helical membrane-spanning segment. N337 provides a ligand contact to beta-D-glucose. At E349–L356 the chain is on the cytoplasmic side. The chain crosses the membrane as a helical span at residues L357 to I377. Topologically, residues N378–S390 are extracellular. Residues A391–L411 traverse the membrane as a helical segment. W408 is an alpha-D-glucose binding site. Residues H412–S425 lie on the Cytoplasmic side of the membrane. The helical transmembrane segment at L426–I446 threads the bilayer. Topologically, residues K447–T451 are extracellular. The chain crosses the membrane as a helical span at residues I452–I472. Over K473–V500 the chain is Cytoplasmic.

The protein belongs to the major facilitator superfamily. Sugar transporter (TC 2.A.1.1) family. As to quaternary structure, homodimer.

Its subcellular location is the cell membrane. The catalysed reaction is D-glucose(out) = D-glucose(in). The enzyme catalyses D-fructose(out) = D-fructose(in). It catalyses the reaction D-galactose(in) = D-galactose(out). It carries out the reaction D-mannose(out) = D-mannose(in). The catalysed reaction is D-glucosamine(out) = D-glucosamine(in). The enzyme catalyses D-xylose(out) = D-xylose(in). With respect to regulation, inhibited by cytochalasin B. In terms of biological role, sodium-independent facilitative hexose transporter. Can transport D-glucose and D-fructose. Can transport D-mannose, D-galactose, D-xylose and D-glucosamine. In Plasmodium knowlesi, this protein is Hexose transporter 1.